The sequence spans 991 residues: Regulator of telomere elongation helicase 1 homolog (991 aa).

A Helicase ATP-binding domain is found at 7 to 319 (NGIPVNFPFE…DDLVLLKEIL (313 aa)). 42–49 (SPTGTGKT) lines the ATP pocket. [4Fe-4S] cluster is bound by residues Cys148, Cys166, Cys175, and Cys211. Residues 254–257 (DEAH) carry the DEAH box motif. The segment at 812–833 (SMKVNPHSRSTKSAGDDAEAGG) is disordered.

It belongs to the helicase family. RAD3/XPD subfamily.

The protein localises to the nucleus. The catalysed reaction is ATP + H2O = ADP + phosphate + H(+). Its function is as follows. A probable ATP-dependent DNA helicase implicated in DNA repair and the maintenance of genomic stability. Acts as an anti-recombinase to counteract toxic recombination and limit crossover during meiosis. Regulates meiotic recombination and crossover homeostasis by physically dissociating strand invasion events and thereby promotes noncrossover repair by meiotic synthesis dependent strand annealing (SDSA) as well as disassembly of D loop recombination intermediates. This Anopheles gambiae (African malaria mosquito) protein is Regulator of telomere elongation helicase 1 homolog.